Here is a 422-residue protein sequence, read N- to C-terminus: Tyrosine--tRNA ligase 1 (422 aa).

Y36 lines the L-tyrosine pocket. The 'HIGH' region signature appears at 41–50; the sequence is PTAGSLHIGH. The L-tyrosine site is built by Y173 and Q177. The 'KMSKS' region motif lies at 233–237; the sequence is KFGKT. ATP is bound at residue K236. Residues 355-419 form the S4 RNA-binding domain; the sequence is SDVVTLLLET…GKKQFAMVKL (65 aa).

This sequence belongs to the class-I aminoacyl-tRNA synthetase family. TyrS type 1 subfamily. Homodimer.

The protein localises to the cytoplasm. The catalysed reaction is tRNA(Tyr) + L-tyrosine + ATP = L-tyrosyl-tRNA(Tyr) + AMP + diphosphate + H(+). In terms of biological role, catalyzes the attachment of tyrosine to tRNA(Tyr) in a two-step reaction: tyrosine is first activated by ATP to form Tyr-AMP and then transferred to the acceptor end of tRNA(Tyr). In Vibrio vulnificus (strain YJ016), this protein is Tyrosine--tRNA ligase 1.